Consider the following 332-residue polypeptide: Probable class II chitinase ARB_00204 (332 aa).

The first 18 residues, 1 to 18 (MKTPFTILAALTVATTLA), serve as a signal peptide directing secretion. Residues 19–331 (DVPDEWDIIE…NPHRKYLDSF (313 aa)) form the GH18 domain. Glu-118 serves as the catalytic Proton donor. An N-linked (GlcNAc...) asparagine glycan is attached at Asn-245.

It belongs to the glycosyl hydrolase 18 family. Chitinase class II subfamily.

The protein resides in the secreted. It carries out the reaction Random endo-hydrolysis of N-acetyl-beta-D-glucosaminide (1-&gt;4)-beta-linkages in chitin and chitodextrins.. In terms of biological role, degrades chitin and chitotriose. The chain is Probable class II chitinase ARB_00204 from Arthroderma benhamiae (strain ATCC MYA-4681 / CBS 112371) (Trichophyton mentagrophytes).